A 189-amino-acid polypeptide reads, in one-letter code: MAPAWSLLLALLLLSCNAICSLGCHLPHSHSLAKRRVLTLLRQLRRVSPSSCLQDRNDFAFPQEALGGSQLQKAQAISVLHEVTQHTFQLFSTEGSAAVWDESLLDRLRTALDQQLTDLQACLRQEEGLPGAPLLKEDSSLAVRKYFHRLTLYLQEKRHSPCAWEVVRAQVMRAFSSSTNLQERFRRKD.

The N-terminal stretch at 1–23 (MAPAWSLLLALLLLSCNAICSLG) is a signal peptide. Disulfide bonds link C24/C122 and C52/C162.

It belongs to the alpha/beta interferon family. In terms of assembly, interacts with CR2.

Its subcellular location is the secreted. Functionally, produced by macrophages, IFN-alpha have antiviral activities. Interferon stimulates the production of two enzymes: a protein kinase and an oligoadenylate synthetase. This is Interferon alpha-1 from Bos taurus (Bovine).